The sequence spans 250 residues: Small ribosomal subunit protein uS3 (250 aa).

Residues 39-107 (VREFLTKKLK…PAQVSINEID (69 aa)) form the KH type-2 domain. Residues 215–250 (MNPAPAEERPAKRGRGRGEGQERRGRRGDRAADKGE) are disordered. Residues 220–250 (AEERPAKRGRGRGEGQERRGRRGDRAADKGE) show a composition bias toward basic and acidic residues.

It belongs to the universal ribosomal protein uS3 family. In terms of assembly, part of the 30S ribosomal subunit. Forms a tight complex with proteins S10 and S14.

Functionally, binds the lower part of the 30S subunit head. Binds mRNA in the 70S ribosome, positioning it for translation. The polypeptide is Small ribosomal subunit protein uS3 (Acinetobacter baumannii (strain SDF)).